The sequence spans 463 residues: Zinc finger protein interacting with ribonucleoprotein K (463 aa).

Residues 14–89 (VTFQDVAICF…PKTNLCEKCV (76 aa)) form the KRAB domain. Disordered regions lie at residues 106 to 128 (HSTE…KPLE) and 171 to 211 (KYRK…TSNG). Basic and acidic residues predominate over residues 174 to 191 (KSTEGRKETSHESDKSEE). The span at 192–201 (CQSLSSQKQT) shows a compositional bias: polar residues. 9 consecutive C2H2-type zinc fingers follow at residues 215–237 (YECS…QRVH), 243–265 (WECR…RRIH), 271–293 (YECS…QKTH), 299–321 (YECS…KRVH), 327–349 (YKCS…RRIH), 355–377 (YECR…QRVH), 383–405 (YKCS…RRIH), 411–433 (YECS…QVVH), and 439–461 (YECD…QKCH).

The protein belongs to the krueppel C2H2-type zinc-finger protein family. In terms of assembly, interacts with HNRPK. Expressed in ovary and liver, and at lower levels in brain and muscle.

It localises to the nucleus. In terms of biological role, may be a transcriptional repressor. This chain is Zinc finger protein interacting with ribonucleoprotein K (Zik1), found in Mus musculus (Mouse).